A 391-amino-acid chain; its full sequence is DNA repair protein NreB (391 aa).

The segment at 3–17 adopts a C4-type zinc-finger fold; sequence CIECRGRMLCSRKVC. The PIP motif motif lies at 384–391; that stretch reads QRTLWEFM.

It belongs to the Nre family. In terms of assembly, interacts with the DNA polymerase sliding clamp (PCNA) via the PIP (PCNA-interacting peptide) motif.

Its function is as follows. Involved in DNA damage repair. This Archaeoglobus fulgidus (strain ATCC 49558 / DSM 4304 / JCM 9628 / NBRC 100126 / VC-16) protein is DNA repair protein NreB.